The following is a 221-amino-acid chain: MARMRVMVRERIDGVRPDTLWFLSHPPVYTVGKRTPPEHRPLAGLGIPVHETNRGGLLTYHAPGQLVGYVMCHIGAMNAVVPFLRLLEARLVDTVEALGIPAERRDTPPGSVELTGVWTRRTNRKIASIGLRCTRKVTSHGFALNVDCDMRPWTWATPCGMPEVEMTSVQRELTDAGHAVPSMAEVREIAAEMLGARNAPHPPAPNLSSGDLGTGTRAGRT.

In terms of domain architecture, BPL/LPL catalytic spans 14 to 202 (GVRPDTLWFL…MLGARNAPHP (189 aa)). Residues 54 to 61 (RGGLLTYH), 128 to 130 (SIG), and 141 to 143 (GFA) contribute to the substrate site. Catalysis depends on Cys159, which acts as the Acyl-thioester intermediate. The interval 197–221 (RNAPHPPAPNLSSGDLGTGTRAGRT) is disordered.

This sequence belongs to the LipB family.

The protein resides in the cytoplasm. The enzyme catalyses octanoyl-[ACP] + L-lysyl-[protein] = N(6)-octanoyl-L-lysyl-[protein] + holo-[ACP] + H(+). Its pathway is protein modification; protein lipoylation via endogenous pathway; protein N(6)-(lipoyl)lysine from octanoyl-[acyl-carrier-protein]: step 1/2. Its function is as follows. Catalyzes the transfer of endogenously produced octanoic acid from octanoyl-acyl-carrier-protein onto the lipoyl domains of lipoate-dependent enzymes. Lipoyl-ACP can also act as a substrate although octanoyl-ACP is likely to be the physiological substrate. The chain is Octanoyltransferase from Frankia casuarinae (strain DSM 45818 / CECT 9043 / HFP020203 / CcI3).